A 187-amino-acid polypeptide reads, in one-letter code: Small ribosomal subunit protein uS7 (187 aa).

This sequence belongs to the universal ribosomal protein uS7 family. As to quaternary structure, part of the 30S ribosomal subunit.

Functionally, one of the primary rRNA binding proteins, it binds directly to 16S rRNA where it nucleates assembly of the head domain of the 30S subunit. Is located at the subunit interface close to the decoding center. This Picrophilus torridus (strain ATCC 700027 / DSM 9790 / JCM 10055 / NBRC 100828 / KAW 2/3) protein is Small ribosomal subunit protein uS7.